A 94-amino-acid polypeptide reads, in one-letter code: Integration host factor subunit beta (94 aa).

It belongs to the bacterial histone-like protein family. As to quaternary structure, heterodimer of an alpha and a beta chain.

Its function is as follows. This protein is one of the two subunits of integration host factor, a specific DNA-binding protein that functions in genetic recombination as well as in transcriptional and translational control. The polypeptide is Integration host factor subunit beta (Photorhabdus laumondii subsp. laumondii (strain DSM 15139 / CIP 105565 / TT01) (Photorhabdus luminescens subsp. laumondii)).